A 61-amino-acid chain; its full sequence is Large ribosomal subunit protein uL29 (61 aa).

The protein belongs to the universal ribosomal protein uL29 family.

The polypeptide is Large ribosomal subunit protein uL29 (Campylobacter jejuni subsp. jejuni serotype O:6 (strain 81116 / NCTC 11828)).